A 77-amino-acid chain; its full sequence is Teretoxin Tsu15.4 (77 aa).

The signal sequence occupies residues M1 to N21. The propeptide occupies S22–R40.

Post-translationally, contains 4 disulfide bonds. In terms of tissue distribution, expressed by the venom duct.

It localises to the secreted. This chain is Teretoxin Tsu15.4, found in Terebra subulata (Chocolate spotted auger).